Reading from the N-terminus, the 480-residue chain is Aspartyl/glutamyl-tRNA(Asn/Gln) amidotransferase subunit B (480 aa).

Belongs to the GatB/GatE family. GatB subfamily. As to quaternary structure, heterotrimer of A, B and C subunits.

The catalysed reaction is L-glutamyl-tRNA(Gln) + L-glutamine + ATP + H2O = L-glutaminyl-tRNA(Gln) + L-glutamate + ADP + phosphate + H(+). It catalyses the reaction L-aspartyl-tRNA(Asn) + L-glutamine + ATP + H2O = L-asparaginyl-tRNA(Asn) + L-glutamate + ADP + phosphate + 2 H(+). Its function is as follows. Allows the formation of correctly charged Asn-tRNA(Asn) or Gln-tRNA(Gln) through the transamidation of misacylated Asp-tRNA(Asn) or Glu-tRNA(Gln) in organisms which lack either or both of asparaginyl-tRNA or glutaminyl-tRNA synthetases. The reaction takes place in the presence of glutamine and ATP through an activated phospho-Asp-tRNA(Asn) or phospho-Glu-tRNA(Gln). The polypeptide is Aspartyl/glutamyl-tRNA(Asn/Gln) amidotransferase subunit B (Saccharophagus degradans (strain 2-40 / ATCC 43961 / DSM 17024)).